A 243-amino-acid polypeptide reads, in one-letter code: Uridylate kinase (243 aa).

An ATP-binding site is contributed by 12 to 15 (KLSG). Residues 20-25 (GAKGFG) are involved in allosteric activation by GTP. Residues Gly55 and Arg59 each contribute to the ATP site. Residues Asp74 and 135 to 142 (TGNPYFTT) contribute to the UMP site. ATP contacts are provided by Gln163, Tyr169, and Asp172.

This sequence belongs to the UMP kinase family. In terms of assembly, homohexamer.

It is found in the cytoplasm. The catalysed reaction is UMP + ATP = UDP + ADP. It functions in the pathway pyrimidine metabolism; CTP biosynthesis via de novo pathway; UDP from UMP (UMPK route): step 1/1. Allosterically activated by GTP. Inhibited by UTP. In terms of biological role, catalyzes the reversible phosphorylation of UMP to UDP. This is Uridylate kinase from Symbiobacterium thermophilum (strain DSM 24528 / JCM 14929 / IAM 14863 / T).